The chain runs to 360 residues: Photosystem II protein D1 3 (360 aa).

Helical transmembrane passes span Tyr29–Ile46, His118–Leu133, and Trp142–Ala156. Residue His118 participates in chlorophyll a binding. Pheophytin a is bound at residue Tyr126. [CaMn4O5] cluster-binding residues include Asp170 and Glu189. Residues Phe197–Leu218 traverse the membrane as a helical segment. His198 lines the chlorophyll a pocket. Residues His215 and Ser264–Phe265 contribute to the a quinone site. His215 is a Fe cation binding site. His272 provides a ligand contact to Fe cation. The helical transmembrane segment at Phe274–Met288 threads the bilayer. [CaMn4O5] cluster-binding residues include His332, Glu333, Asp342, and Ala344. Positions Ala345 to Gly360 are excised as a propeptide.

The protein belongs to the reaction center PufL/M/PsbA/D family. PSII is composed of 1 copy each of membrane proteins PsbA, PsbB, PsbC, PsbD, PsbE, PsbF, PsbH, PsbI, PsbJ, PsbK, PsbL, PsbM, PsbT, PsbX, PsbY, PsbZ, Psb30/Ycf12, peripheral proteins PsbO, CyanoQ (PsbQ), PsbU, PsbV and a large number of cofactors. It forms dimeric complexes. The cofactor is The D1/D2 heterodimer binds P680, chlorophylls that are the primary electron donor of PSII, and subsequent electron acceptors. It shares a non-heme iron and each subunit binds pheophytin, quinone, additional chlorophylls, carotenoids and lipids. D1 provides most of the ligands for the Mn4-Ca-O5 cluster of the oxygen-evolving complex (OEC). There is also a Cl(-1) ion associated with D1 and D2, which is required for oxygen evolution. The PSII complex binds additional chlorophylls, carotenoids and specific lipids.. Tyr-161 forms a radical intermediate that is referred to as redox-active TyrZ, YZ or Y-Z. In terms of processing, C-terminally processed by CtpA; processing is essential to allow assembly of the oxygen-evolving complex and thus photosynthetic growth.

Its subcellular location is the cellular thylakoid membrane. The catalysed reaction is 2 a plastoquinone + 4 hnu + 2 H2O = 2 a plastoquinol + O2. Photosystem II (PSII) is a light-driven water:plastoquinone oxidoreductase that uses light energy to abstract electrons from H(2)O, generating O(2) and a proton gradient subsequently used for ATP formation. It consists of a core antenna complex that captures photons, and an electron transfer chain that converts photonic excitation into a charge separation. The D1/D2 (PsbA/PsbD) reaction center heterodimer binds P680, the primary electron donor of PSII as well as several subsequent electron acceptors. The protein is Photosystem II protein D1 3 of Synechococcus sp. (strain ATCC 27144 / PCC 6301 / SAUG 1402/1) (Anacystis nidulans).